The sequence spans 341 residues: Inactive caspase-12 (341 aa).

In terms of domain architecture, CARD spans 1 to 92 (MADEKPSNGV…QLSSDISSDG (92 aa)). Phosphoserine occurs at positions 85 and 90. Active-site residues include His-172 and Cys-220.

The protein belongs to the peptidase C14A family. As to expression, widely expressed, with highest levels in lung.

In terms of biological role, may function as a negative regulator of inflammatory responses and innate immunity. May reduce cytokine release in response to bacterial lipopolysaccharide during infection. Reduces activation of NF-kappa-B in response to TNF. May lack protease activity. This chain is Inactive caspase-12 (CASP12), found in Homo sapiens (Human).